Here is a 785-residue protein sequence, read N- to C-terminus: AP-1 complex subunit gamma-like 2 (785 aa).

The interval 369–379 is essential for ubiquitin-binding; it reads LSLALVNSSNV. Residues 592-617 are disordered; the sequence is GPQADEEAKESKEAAQLSEAAPVPTE. Residues 665–780 enclose the GAE domain; it reads APIPDLKVFE…QEIFEVNNLP (116 aa).

It belongs to the adaptor complexes large subunit family. May interact with AP1S1/Sigma1A-adaptin and AP1S2/Sigma1B-adaptin. Probably does not interact with APB1. Interacts (via GAE domain) with RABEP1, NECAP1, CLINT1 and AFTPH/aftiphilin. As to quaternary structure, (Microbial infection) Interacts with HBV major surface antigen L. Interacts with HBV core protein C in a ubiquitin-dependent manner. In terms of tissue distribution, expressed in all but one (skeletal muscle) tissues examined.

The protein localises to the golgi apparatus membrane. It is found in the cytoplasmic vesicle membrane. The protein resides in the endosome membrane. May function in protein sorting in late endosomes or multivesucular bodies (MVBs). Its function is as follows. (Microbial infection) Involved in MVB-assisted maturation of hepatitis B virus (HBV). The sequence is that of AP-1 complex subunit gamma-like 2 (AP1G2) from Homo sapiens (Human).